A 403-amino-acid chain; its full sequence is Cytoplasmic tRNA 2-thiolation protein 2 (403 aa).

This sequence belongs to the CTU2/NCS2 family.

It is found in the cytoplasm. The protein operates within tRNA modification; 5-methoxycarbonylmethyl-2-thiouridine-tRNA biosynthesis. Plays a central role in 2-thiolation of mcm(5)S(2)U at tRNA wobble positions of tRNA(Lys), tRNA(Glu) and tRNA(Gln). May act by forming a heterodimer with NCS6/CTU1 that ligates sulfur from thiocarboxylated URM1 onto the uridine of tRNAs at wobble position. This chain is Cytoplasmic tRNA 2-thiolation protein 2, found in Drosophila willistoni (Fruit fly).